A 195-amino-acid polypeptide reads, in one-letter code: ATP-dependent Clp protease proteolytic subunit 3 (195 aa).

The active-site Nucleophile is S97. H122 is an active-site residue.

It belongs to the peptidase S14 family. Fourteen ClpP subunits assemble into 2 heptameric rings which stack back to back to give a disk-like structure with a central cavity, resembling the structure of eukaryotic proteasomes.

The protein localises to the cytoplasm. The enzyme catalyses Hydrolysis of proteins to small peptides in the presence of ATP and magnesium. alpha-casein is the usual test substrate. In the absence of ATP, only oligopeptides shorter than five residues are hydrolyzed (such as succinyl-Leu-Tyr-|-NHMec, and Leu-Tyr-Leu-|-Tyr-Trp, in which cleavage of the -Tyr-|-Leu- and -Tyr-|-Trp bonds also occurs).. Its function is as follows. Cleaves peptides in various proteins in a process that requires ATP hydrolysis. Has a chymotrypsin-like activity. Plays a major role in the degradation of misfolded proteins. In Rhizobium meliloti (strain 1021) (Ensifer meliloti), this protein is ATP-dependent Clp protease proteolytic subunit 3.